Reading from the N-terminus, the 156-residue chain is Probable succinate transporter subunit YjjB (156 aa).

4 consecutive transmembrane segments (helical) span residues 7 to 27 (WALLQDMVLAAIPALGFAMVF), 54 to 74 (FGMNIELASLVASIMIGVIGI), 86 to 106 (VFTVAAVIPMFPGISAYTAMI), and 128 to 148 (FLKASFIVGALSIGLSLPGLW).

Belongs to the ThrE exporter (TC 2.A.79) family. In terms of assembly, the transporter is composed of YjjB and YjjP.

Its subcellular location is the cell inner membrane. Functionally, involved in succinate export with YjjP. Both proteins are required for export. This is Probable succinate transporter subunit YjjB from Yersinia pseudotuberculosis serotype I (strain IP32953).